The chain runs to 448 residues: Porin AaxA (448 aa).

Positions 1-24 are cleaved as a signal peptide; that stretch reads MASFRSSLLSALCAYGMMVMPAYA.

It belongs to the OprB family.

It is found in the cell outer membrane. In terms of biological role, facilitates L-arginine uptake, as part of the AaxABC system. The arginine uptake by the bacterium in the macrophage may be a virulence factor against the host innate immune response. This chain is Porin AaxA (aaxA), found in Chlamydia abortus (strain DSM 27085 / S26/3) (Chlamydophila abortus).